The chain runs to 1026 residues: Unconventional myosin-Ic (1026 aa).

Met-1 bears the N-acetylmethionine mark. In terms of domain architecture, Myosin motor spans 12–695; sequence GVQDFLLLEN…TLFITEDALE (684 aa). ATP is bound by residues Asn-53, Tyr-61, 104–113, and 157–161; these read SGESGAGKTE and NDNSS. Lys-349 is modified (N6-methyllysine). Residues 572 to 594 form an actin-binding region; that stretch reads LAKLMDILMSKEPSYVRCIKPND. IQ domains lie at 698 to 727 and 721 to 750; these read KQTI…AVIV and IRHA…AADT. Residues 849–1024 enclose the TH1 domain; it reads KDGYSRSVPK…NGHLSVTTPR (176 aa).

This sequence belongs to the TRAFAC class myosin-kinesin ATPase superfamily. Myosin family. Interacts (via its IQ motifs) with calm.

The protein localises to the cytoplasm. Its subcellular location is the cell cortex. The protein resides in the cell projection. It localises to the ruffle membrane. It is found in the cytoplasmic vesicle. The protein localises to the stereocilium membrane. Functionally, myosins are actin-based motor molecules with ATPase activity. Unconventional myosins serve in intracellular movements. Their highly divergent tails are presumed to bind to membranous compartments, which would be moved relative to actin filaments. This Danio rerio (Zebrafish) protein is Unconventional myosin-Ic (myo1c).